We begin with the raw amino-acid sequence, 557 residues long: Probable protein kinase UbiB (557 aa).

Residues 121–509 (AFDTTPLASA…RKLQTRVVTA (389 aa)) form the Protein kinase domain. ATP-binding positions include 127 to 135 (LASASIAQV) and Lys-154. Residue Asp-289 is the Proton acceptor of the active site. Helical transmembrane passes span 506–526 (VVTA…YGLH) and 535–555 (VPVW…IAWL).

This sequence belongs to the ABC1 family. UbiB subfamily.

Its subcellular location is the cell inner membrane. It functions in the pathway cofactor biosynthesis; ubiquinone biosynthesis [regulation]. Functionally, is probably a protein kinase regulator of UbiI activity which is involved in aerobic coenzyme Q (ubiquinone) biosynthesis. The sequence is that of Probable protein kinase UbiB from Xanthomonas campestris pv. campestris (strain B100).